The primary structure comprises 252 residues: Carbohydrate deacetylase (252 aa).

2 residues coordinate Mg(2+): His59 and His122.

It belongs to the YdjC deacetylase family. As to quaternary structure, homodimer. Mg(2+) is required as a cofactor.

Probably catalyzes the deacetylation of acetylated carbohydrates an important step in the degradation of oligosaccharides. In Vibrio cholerae serotype O1 (strain ATCC 39315 / El Tor Inaba N16961), this protein is Carbohydrate deacetylase.